The sequence spans 467 residues: ATP synthase subunit beta (467 aa).

Residue 154-161 (GGAGVGKT) coordinates ATP.

It belongs to the ATPase alpha/beta chains family. As to quaternary structure, F-type ATPases have 2 components, CF(1) - the catalytic core - and CF(0) - the membrane proton channel. CF(1) has five subunits: alpha(3), beta(3), gamma(1), delta(1), epsilon(1). CF(0) has three main subunits: a(1), b(2) and c(9-12). The alpha and beta chains form an alternating ring which encloses part of the gamma chain. CF(1) is attached to CF(0) by a central stalk formed by the gamma and epsilon chains, while a peripheral stalk is formed by the delta and b chains.

The protein localises to the cell inner membrane. It catalyses the reaction ATP + H2O + 4 H(+)(in) = ADP + phosphate + 5 H(+)(out). Functionally, produces ATP from ADP in the presence of a proton gradient across the membrane. The catalytic sites are hosted primarily by the beta subunits. This Leptospira interrogans serogroup Icterohaemorrhagiae serovar copenhageni (strain Fiocruz L1-130) protein is ATP synthase subunit beta.